Consider the following 155-residue polypeptide: S-ribosylhomocysteine lyase (155 aa).

H57, H61, and C124 together coordinate Fe cation.

This sequence belongs to the LuxS family. In terms of assembly, homodimer. Fe cation is required as a cofactor.

The catalysed reaction is S-(5-deoxy-D-ribos-5-yl)-L-homocysteine = (S)-4,5-dihydroxypentane-2,3-dione + L-homocysteine. Involved in the synthesis of autoinducer 2 (AI-2) which is secreted by bacteria and is used to communicate both the cell density and the metabolic potential of the environment. The regulation of gene expression in response to changes in cell density is called quorum sensing. Catalyzes the transformation of S-ribosylhomocysteine (RHC) to homocysteine (HC) and 4,5-dihydroxy-2,3-pentadione (DPD). This chain is S-ribosylhomocysteine lyase, found in Listeria monocytogenes serotype 4a (strain HCC23).